A 476-amino-acid chain; its full sequence is Proline dehydrogenase 2, mitochondrial (476 aa).

The transit peptide at 1-29 (MANRFLRPNLIHRFSTVSPVGPPTTIIPE) directs the protein to the mitochondrion.

Belongs to the proline oxidase family. It depends on FAD as a cofactor. As to expression, expressed in the vascular tissue and in the abscission zone of petals, sepals, stamina, pistils and siliques. Not detected in petioles.

It is found in the mitochondrion. The catalysed reaction is L-proline + a quinone = (S)-1-pyrroline-5-carboxylate + a quinol + H(+). It functions in the pathway amino-acid degradation; L-proline degradation into L-glutamate; L-glutamate from L-proline: step 1/2. In terms of biological role, converts proline to delta-1-pyrroline-5-carboxylate. The polypeptide is Proline dehydrogenase 2, mitochondrial (POX2) (Arabidopsis thaliana (Mouse-ear cress)).